The following is a 31-amino-acid chain: Diuretic hormone class 2 (31 aa).

Pro31 is subject to Proline amide.

The protein belongs to the diuretic hormone class 2 family.

It is found in the secreted. Regulation of fluid secretion. Stimulates primary urine secretion by Malpighian tubules and causes a dose-dependent stimulation of cAMP levels in the tubules. Has a nonselective effect on Na(+)/K(+) ion transport. In vitro, primarily elevates intracellular Ca(2+). In Apis mellifera (Honeybee), this protein is Diuretic hormone class 2.